A 519-amino-acid polypeptide reads, in one-letter code: tRNA-2-methylthio-N(6)-dimethylallyladenosine synthase (519 aa).

The segment at 1–23 is disordered; that stretch reads MNEQQRKQQSQIRTEQANVDRIK. Polar residues predominate over residues 7-17; that stretch reads KQQSQIRTEQA. An MTTase N-terminal domain is found at 76–194; the sequence is KKFLIRTYGC…LPHLVKEALF (119 aa). 6 residues coordinate [4Fe-4S] cluster: C85, C121, C155, C231, C235, and C238. The 234-residue stretch at 217–450 folds into the Radical SAM core domain; sequence RKGKIKAWVN…VNKQSAASMK (234 aa). One can recognise a TRAM domain in the interval 450–513; sequence KDYAGKKVKV…TWSLNGVMVE (64 aa).

This sequence belongs to the methylthiotransferase family. MiaB subfamily. In terms of assembly, monomer. [4Fe-4S] cluster serves as cofactor.

The protein localises to the cytoplasm. The catalysed reaction is N(6)-dimethylallyladenosine(37) in tRNA + (sulfur carrier)-SH + AH2 + 2 S-adenosyl-L-methionine = 2-methylsulfanyl-N(6)-dimethylallyladenosine(37) in tRNA + (sulfur carrier)-H + 5'-deoxyadenosine + L-methionine + A + S-adenosyl-L-homocysteine + 2 H(+). Catalyzes the methylthiolation of N6-(dimethylallyl)adenosine (i(6)A), leading to the formation of 2-methylthio-N6-(dimethylallyl)adenosine (ms(2)i(6)A) at position 37 in tRNAs that read codons beginning with uridine. This Oceanobacillus iheyensis (strain DSM 14371 / CIP 107618 / JCM 11309 / KCTC 3954 / HTE831) protein is tRNA-2-methylthio-N(6)-dimethylallyladenosine synthase.